We begin with the raw amino-acid sequence, 222 residues long: Ubiquitin-conjugating enzyme E2 S (222 aa).

Met-1 is subject to N-acetylmethionine. One can recognise a UBC core domain in the interval 11–157; it reads HIIRLVYKEV…ARLLTEIHGG (147 aa). Cys-95 (glycyl thioester intermediate) is an active-site residue. The disordered stretch occupies residues 156–222; sequence GGAGGPSGRA…TDKKRALRRL (67 aa). A Phosphoserine modification is found at Ser-173. A compositionally biased stretch (basic residues) spans 208–222; the sequence is AAKKKTDKKRALRRL.

Belongs to the ubiquitin-conjugating enzyme family. As to quaternary structure, component of the APC/C complex, composed of at least 14 distinct subunits that assemble into a complex of at least 19 chains with a combined molecular mass of around 1.2 MDa. Within this complex, directly interacts with ANAPC2 and ANAPC4. Interacts with CDC20, FZR1/CDH1 and VHL. Post-translationally, autoubiquitinated by the APC/C complex during G1, leading to its degradation by the proteasome.

It catalyses the reaction S-ubiquitinyl-[E1 ubiquitin-activating enzyme]-L-cysteine + [E2 ubiquitin-conjugating enzyme]-L-cysteine = [E1 ubiquitin-activating enzyme]-L-cysteine + S-ubiquitinyl-[E2 ubiquitin-conjugating enzyme]-L-cysteine.. The protein operates within protein modification; protein ubiquitination. Its function is as follows. Accepts ubiquitin from the E1 complex and catalyzes its covalent attachment to other proteins. Catalyzes 'Lys-11'-linked polyubiquitination. Acts as an essential factor of the anaphase promoting complex/cyclosome (APC/C), a cell cycle-regulated ubiquitin ligase that controls progression through mitosis. Acts by specifically elongating 'Lys-11'-linked polyubiquitin chains initiated by the E2 enzyme UBE2C/UBCH10 on APC/C substrates, enhancing the degradation of APC/C substrates by the proteasome and promoting mitotic exit. Also acts by elongating ubiquitin chains initiated by the E2 enzyme UBE2D1/UBCH5 in vitro; it is however unclear whether UBE2D1/UBCH5 acts as an E2 enzyme for the APC/C in vivo. Also involved in ubiquitination and subsequent degradation of VHL, resulting in an accumulation of HIF1A. In vitro able to promote polyubiquitination using all 7 ubiquitin Lys residues, except 'Lys-48'-linked polyubiquitination. This is Ubiquitin-conjugating enzyme E2 S (UBE2S) from Homo sapiens (Human).